Here is a 104-residue protein sequence, read N- to C-terminus: Iron-sulfur cluster assembly protein CyaY (104 aa).

Belongs to the frataxin family.

Functionally, involved in iron-sulfur (Fe-S) cluster assembly. May act as a regulator of Fe-S biogenesis. The protein is Iron-sulfur cluster assembly protein CyaY of Vibrio vulnificus (strain CMCP6).